Reading from the N-terminus, the 454-residue chain is Bifunctional protein GlmU (454 aa).

Residues 1–226 form a pyrophosphorylase region; that stretch reads MSLNVVILAA…AIEVEGANNR (226 aa). Residues 8 to 11, lysine 22, glutamine 73, 78 to 79, 100 to 102, glycine 137, glutamate 151, asparagine 166, and asparagine 224 each bind UDP-N-acetyl-alpha-D-glucosamine; these read LAAG, GT, and YGD. Aspartate 102 contributes to the Mg(2+) binding site. Asparagine 224 serves as a coordination point for Mg(2+). The segment at 227 to 247 is linker; sequence VQLAQLERAYQARAAEKMMLE. The N-acetyltransferase stretch occupies residues 248–454; sequence GANLRDPARI…GWQRPIKIKK (207 aa). The UDP-N-acetyl-alpha-D-glucosamine site is built by arginine 330 and lysine 348. The active-site Proton acceptor is histidine 360. UDP-N-acetyl-alpha-D-glucosamine contacts are provided by tyrosine 363 and asparagine 374. Acetyl-CoA contacts are provided by residues alanine 377, 383–384, serine 402, alanine 420, and arginine 437; that span reads NY.

It in the N-terminal section; belongs to the N-acetylglucosamine-1-phosphate uridyltransferase family. This sequence in the C-terminal section; belongs to the transferase hexapeptide repeat family. Homotrimer. The cofactor is Mg(2+).

Its subcellular location is the cytoplasm. The catalysed reaction is alpha-D-glucosamine 1-phosphate + acetyl-CoA = N-acetyl-alpha-D-glucosamine 1-phosphate + CoA + H(+). It catalyses the reaction N-acetyl-alpha-D-glucosamine 1-phosphate + UTP + H(+) = UDP-N-acetyl-alpha-D-glucosamine + diphosphate. It functions in the pathway nucleotide-sugar biosynthesis; UDP-N-acetyl-alpha-D-glucosamine biosynthesis; N-acetyl-alpha-D-glucosamine 1-phosphate from alpha-D-glucosamine 6-phosphate (route II): step 2/2. It participates in nucleotide-sugar biosynthesis; UDP-N-acetyl-alpha-D-glucosamine biosynthesis; UDP-N-acetyl-alpha-D-glucosamine from N-acetyl-alpha-D-glucosamine 1-phosphate: step 1/1. The protein operates within bacterial outer membrane biogenesis; LPS lipid A biosynthesis. Catalyzes the last two sequential reactions in the de novo biosynthetic pathway for UDP-N-acetylglucosamine (UDP-GlcNAc). The C-terminal domain catalyzes the transfer of acetyl group from acetyl coenzyme A to glucosamine-1-phosphate (GlcN-1-P) to produce N-acetylglucosamine-1-phosphate (GlcNAc-1-P), which is converted into UDP-GlcNAc by the transfer of uridine 5-monophosphate (from uridine 5-triphosphate), a reaction catalyzed by the N-terminal domain. This chain is Bifunctional protein GlmU, found in Shewanella frigidimarina (strain NCIMB 400).